The primary structure comprises 338 residues: 4-hydroxythreonine-4-phosphate dehydrogenase (338 aa).

Substrate-binding residues include His139 and Thr140. A divalent metal cation contacts are provided by His169, His214, and His270. Positions 278, 287, and 296 each coordinate substrate.

It belongs to the PdxA family. In terms of assembly, homodimer. It depends on Zn(2+) as a cofactor. Mg(2+) serves as cofactor. Requires Co(2+) as cofactor.

The protein localises to the cytoplasm. The enzyme catalyses 4-(phosphooxy)-L-threonine + NAD(+) = 3-amino-2-oxopropyl phosphate + CO2 + NADH. Its pathway is cofactor biosynthesis; pyridoxine 5'-phosphate biosynthesis; pyridoxine 5'-phosphate from D-erythrose 4-phosphate: step 4/5. Its function is as follows. Catalyzes the NAD(P)-dependent oxidation of 4-(phosphooxy)-L-threonine (HTP) into 2-amino-3-oxo-4-(phosphooxy)butyric acid which spontaneously decarboxylates to form 3-amino-2-oxopropyl phosphate (AHAP). In Desulfosudis oleivorans (strain DSM 6200 / JCM 39069 / Hxd3) (Desulfococcus oleovorans), this protein is 4-hydroxythreonine-4-phosphate dehydrogenase.